A 283-amino-acid polypeptide reads, in one-letter code: Phosphate import ATP-binding protein PstB (283 aa).

The span at 1–20 shows a compositional bias: polar residues; sequence MAQTLAQTKQISQSHTFDVS. The disordered stretch occupies residues 1-33; that stretch reads MAQTLAQTKQISQSHTFDVSQSHHKTPNDTNSH. The region spanning 37–278 is the ABC transporter domain; it reads YSTQNLDLWY…PSNKKTEDYI (242 aa). 69–76 serves as a coordination point for ATP; it reads GPSGCGKS.

The protein belongs to the ABC transporter superfamily. Phosphate importer (TC 3.A.1.7) family. In terms of assembly, the complex is composed of two ATP-binding proteins (PstB), two transmembrane proteins (PstC and PstA) and a solute-binding protein (PstS).

The protein localises to the cell membrane. It carries out the reaction phosphate(out) + ATP + H2O = ADP + 2 phosphate(in) + H(+). Part of the ABC transporter complex PstSACB involved in phosphate import. Responsible for energy coupling to the transport system. This chain is Phosphate import ATP-binding protein PstB, found in Staphylococcus aureus (strain bovine RF122 / ET3-1).